Consider the following 124-residue polypeptide: Holo-[acyl-carrier-protein] synthase (124 aa).

2 residues coordinate Mg(2+): Asp-7 and Glu-55.

This sequence belongs to the P-Pant transferase superfamily. AcpS family. Mg(2+) is required as a cofactor.

It is found in the cytoplasm. The enzyme catalyses apo-[ACP] + CoA = holo-[ACP] + adenosine 3',5'-bisphosphate + H(+). Functionally, transfers the 4'-phosphopantetheine moiety from coenzyme A to a Ser of acyl-carrier-protein. The sequence is that of Holo-[acyl-carrier-protein] synthase from Borreliella burgdorferi (strain ATCC 35210 / DSM 4680 / CIP 102532 / B31) (Borrelia burgdorferi).